Here is a 391-residue protein sequence, read N- to C-terminus: Na(+)/H(+) antiporter NhaA (391 aa).

The next 11 membrane-spanning stretches (helical) occupy residues A14–L34, L59–V79, S95–F115, V124–L144, V154–F174, T177–L197, I213–I233, F261–F281, P287–F307, I328–L348, and I363–V383.

It belongs to the NhaA Na(+)/H(+) (TC 2.A.33) antiporter family.

It localises to the cell inner membrane. It carries out the reaction Na(+)(in) + 2 H(+)(out) = Na(+)(out) + 2 H(+)(in). In terms of biological role, na(+)/H(+) antiporter that extrudes sodium in exchange for external protons. The chain is Na(+)/H(+) antiporter NhaA from Shewanella amazonensis (strain ATCC BAA-1098 / SB2B).